The sequence spans 274 residues: tRNA uridine(34) hydroxylase (274 aa).

Residues 121-217 (SRSDVYTIDT…YFKSTKNTNN (97 aa)) form the Rhodanese domain. C177 serves as the catalytic Cysteine persulfide intermediate.

It belongs to the TrhO family.

It catalyses the reaction uridine(34) in tRNA + AH2 + O2 = 5-hydroxyuridine(34) in tRNA + A + H2O. Functionally, catalyzes oxygen-dependent 5-hydroxyuridine (ho5U) modification at position 34 in tRNAs. In Ehrlichia canis (strain Jake), this protein is tRNA uridine(34) hydroxylase.